The primary structure comprises 460 residues: Light-independent protochlorophyllide reductase subunit N (460 aa).

[4Fe-4S] cluster is bound by residues Cys22, Cys47, and Cys107.

Belongs to the BchN/ChlN family. Protochlorophyllide reductase is composed of three subunits; ChlL, ChlN and ChlB. Forms a heterotetramer of two ChlB and two ChlN subunits. Requires [4Fe-4S] cluster as cofactor.

It is found in the plastid. Its subcellular location is the cyanelle. The enzyme catalyses chlorophyllide a + oxidized 2[4Fe-4S]-[ferredoxin] + 2 ADP + 2 phosphate = protochlorophyllide a + reduced 2[4Fe-4S]-[ferredoxin] + 2 ATP + 2 H2O. It functions in the pathway porphyrin-containing compound metabolism; chlorophyll biosynthesis (light-independent). Component of the dark-operative protochlorophyllide reductase (DPOR) that uses Mg-ATP and reduced ferredoxin to reduce ring D of protochlorophyllide (Pchlide) to form chlorophyllide a (Chlide). This reaction is light-independent. The NB-protein (ChlN-ChlB) is the catalytic component of the complex. The protein is Light-independent protochlorophyllide reductase subunit N of Cyanophora paradoxa.